The primary structure comprises 263 residues: Small ribosomal subunit protein eS4 (263 aa).

One can recognise an S4 RNA-binding domain in the interval 42–104 (LPLIIFLRNR…TGENFRLIYD (63 aa)).

This sequence belongs to the eukaryotic ribosomal protein eS4 family.

The polypeptide is Small ribosomal subunit protein eS4 (RPS4) (Bos taurus (Bovine)).